Reading from the N-terminus, the 216-residue chain is Sperm microtubule inner protein 8 (216 aa).

As to quaternary structure, microtubule inner protein component of sperm flagellar doublet microtubules. Expressed in testis, prostate and placenta.

The protein localises to the cytoplasm. It localises to the cytoskeleton. The protein resides in the flagellum axoneme. Microtubule inner protein (MIP) part of the dynein-decorated doublet microtubules (DMTs) in flagellum axoneme. May serve to reinforce and thus stabilize the microtubule structure in the sperm flagella. This is Sperm microtubule inner protein 8 from Homo sapiens (Human).